The primary structure comprises 172 residues: Bifunctional protein PyrR (172 aa).

A PRPP-binding motif is present at residues 90-102 (LVLVDDVLMSGRT).

This sequence belongs to the purine/pyrimidine phosphoribosyltransferase family. PyrR subfamily.

It carries out the reaction UMP + diphosphate = 5-phospho-alpha-D-ribose 1-diphosphate + uracil. In terms of biological role, regulates the transcription of the pyrimidine nucleotide (pyr) operon in response to exogenous pyrimidines. Functionally, also displays a weak uracil phosphoribosyltransferase activity which is not physiologically significant. The sequence is that of Bifunctional protein PyrR from Pseudomonas putida (strain GB-1).